The sequence spans 63 residues: uncharacterized protein (63 aa).

The helical transmembrane segment at 37–57 (IFFPTTFDVLLLAILIFLACA) threads the bilayer.

The protein resides in the cell membrane. This is an uncharacterized protein from Bacillus subtilis (strain 168).